A 158-amino-acid polypeptide reads, in one-letter code: Auxin-responsive protein IAA31 (158 aa).

The span at 1 to 40 (MEVSNSCSSFSSSSVDSTKPSPSESSVNLSLSLTFPSTSP) shows a compositional bias: low complexity. The tract at residues 1-49 (MEVSNSCSSFSSSSVDSTKPSPSESSVNLSLSLTFPSTSPQREARQDWP) is disordered. The EAR-like (transcriptional repression) motif lies at 29-33 (LSLSL). The PB1 domain occupies 72-157 (SLFVKVYMEG…RRLKITRPER (86 aa)).

The protein belongs to the Aux/IAA family. In terms of assembly, homodimers and heterodimers.

The protein localises to the nucleus. Aux/IAA proteins are short-lived transcriptional factors that function as repressors of early auxin response genes at low auxin concentrations. Repression is thought to result from the interaction with auxin response factors (ARFs), proteins that bind to the auxin-responsive promoter element (AuxRE). Formation of heterodimers with ARF proteins may alter their ability to modulate early auxin response genes expression. The polypeptide is Auxin-responsive protein IAA31 (IAA31) (Arabidopsis thaliana (Mouse-ear cress)).